We begin with the raw amino-acid sequence, 455 residues long: Folate transporter 2 (455 aa).

Helical transmembrane passes span 42-64, 84-103, 110-131, 137-157, 177-195, 201-221, 242-261, and 281-301; these read IVVYLVGLSDGLTHLASLAIYYL, YIPFILKPVIALITDSFSIF, YLFLFSLFQSLNFLALAFLNLS, LILFFISLCASFCTTVAEALV, IASKAIGSLSVAYFSGYFL, EYIFIATSIFPLIISLSCLFL, FINTPIFLGPFLYIFVYMSG, and SFMGTLRLTYGIASLIGIIIY. An N-linked (GlcNAc...) asparagine glycan is attached at Asn-307. 2 consecutive transmembrane segments (helical) span residues 313 to 331 and 347 to 367; these read TLIITTLVSFPIYISPIIL and VLSGGFLIEAITEIQLLPLFI. Residue Asn-416 is glycosylated (N-linked (GlcNAc...) asparagine). Residues 417–438 traverse the membrane as a helical segment; sequence LSLYILTCGFFLLFSLTLVPLL.

This sequence belongs to the major facilitator superfamily. Folate-biopterin transporter (TC 2.A.71) family.

Its subcellular location is the cell membrane. It catalyses the reaction folate(in) + H(+)(in) = folate(out) + H(+)(out). The enzyme catalyses (6S)-5-methyl-5,6,7,8-tetrahydrofolate(in) + H(+)(in) = (6S)-5-methyl-5,6,7,8-tetrahydrofolate(out) + H(+)(out). With respect to regulation, transport of folates is inhibited by probenecid and methotrexate. Its function is as follows. Folate transporter with broad substrate specificity. Transports folic acid, folinic acid, pteroic acid, dihydropteroic acid, the folate precursor p-amino benzoic acid (pABA) and the human folate catabolite pABA monoglutamate. Can transport 5-methyltetrahydrofolate with low efficiency. The protein is Folate transporter 2 of Plasmodium falciparum (isolate 3D7).